The sequence spans 126 residues: Protein ApaG (126 aa).

Residues 2–126 enclose the ApaG domain; the sequence is TELETSIKID…FRLSIPGLLH (125 aa).

This is Protein ApaG from Shewanella woodyi (strain ATCC 51908 / MS32).